The following is a 234-amino-acid chain: AA9 family lytic polysaccharide monooxygenase D (234 aa).

A signal peptide spans 1–18 (MRIEKLLNAALLAGAVSA). Cu(2+) is bound by residues H19 and H95. C57 and C182 form a disulfide bridge. Residues H168 and Q177 each contribute to the O2 site. A Cu(2+)-binding site is contributed by Y179.

Belongs to the polysaccharide monooxygenase AA9 family. Requires Cu(2+) as cofactor.

It localises to the secreted. The catalysed reaction is [(1-&gt;4)-beta-D-glucosyl]n+m + reduced acceptor + O2 = 4-dehydro-beta-D-glucosyl-[(1-&gt;4)-beta-D-glucosyl]n-1 + [(1-&gt;4)-beta-D-glucosyl]m + acceptor + H2O.. Lytic polysaccharide monooxygenase (LPMO) that depolymerizes crystalline and amorphous polysaccharides via the oxidation of scissile alpha- or beta-(1-4)-glycosidic bonds, yielding C1 or C4 oxidation products. Catalysis by LPMOs requires the reduction of the active-site copper from Cu(II) to Cu(I) by a reducing agent and H(2)O(2) or O(2) as a cosubstrate. The polypeptide is AA9 family lytic polysaccharide monooxygenase D (Malbranchea cinnamomea (Thermophilic fungus)).